We begin with the raw amino-acid sequence, 110 residues long: Ribonuclease P protein component (110 aa).

This sequence belongs to the RnpA family. In terms of assembly, consists of a catalytic RNA component (M1 or rnpB) and a protein subunit.

It carries out the reaction Endonucleolytic cleavage of RNA, removing 5'-extranucleotides from tRNA precursor.. Its function is as follows. RNaseP catalyzes the removal of the 5'-leader sequence from pre-tRNA to produce the mature 5'-terminus. It can also cleave other RNA substrates such as 4.5S RNA. The protein component plays an auxiliary but essential role in vivo by binding to the 5'-leader sequence and broadening the substrate specificity of the ribozyme. This chain is Ribonuclease P protein component, found in Mesorhizobium japonicum (strain LMG 29417 / CECT 9101 / MAFF 303099) (Mesorhizobium loti (strain MAFF 303099)).